Here is a 270-residue protein sequence, read N- to C-terminus: Oxidoreductase NAD-binding domain-containing protein 1 (270 aa).

The region spanning methionine 20–glutamine 123 is the FAD-binding FR-type domain. Glycine 137–proline 142 lines the NAD(+) pocket.

The chain is Oxidoreductase NAD-binding domain-containing protein 1 (oxnad1) from Danio rerio (Zebrafish).